A 561-amino-acid chain; its full sequence is Terpene synthase 3 (561 aa).

Positions 315, 319, 458, and 466 each coordinate Mg(2+). The short motif at 315 to 319 (DDVYD) is the DDXXD motif element.

This sequence belongs to the terpene synthase family. Tpsa subfamily. Mg(2+) is required as a cofactor. The cofactor is Mn(2+). In terms of tissue distribution, mostly expressed in stems amd leaves, and, to a lower extent, in roots and fruits.

The enzyme catalyses (2E,6E)-farnesyl diphosphate = germacrene D + diphosphate. It carries out the reaction (2E,6E)-farnesyl diphosphate = alpha-copaene + diphosphate. It functions in the pathway secondary metabolite biosynthesis; terpenoid biosynthesis. Sesquiterpene synthase involved in the biosynthesis of volatile compounds that contribute to the characteristic flavors of black pepper. Mediates the conversion of (2E,6E)-farnesyl diphosphate (FPP) into alpha-copaene and germacrene D. The polypeptide is Terpene synthase 3 (Piper nigrum (Black pepper)).